Reading from the N-terminus, the 847-residue chain is UPF0182 protein CYB_0372 (847 aa).

Helical transmembrane passes span 7-27 (GLFL…LAAF), 51-71 (WGLG…NICS), 76-96 (ATLA…AGSL), 141-161 (FNLV…ELGL), 168-188 (LALS…LFLI), 220-240 (LPAT…FWAL), and 259-279 (WASS…FGLL).

Belongs to the UPF0182 family.

It localises to the cell membrane. This chain is UPF0182 protein CYB_0372, found in Synechococcus sp. (strain JA-2-3B'a(2-13)) (Cyanobacteria bacterium Yellowstone B-Prime).